Reading from the N-terminus, the 605-residue chain is NADH-ubiquinone oxidoreductase chain 5 (605 aa).

15 consecutive transmembrane segments (helical) span residues 8-28, 34-54, 87-107, 117-137, 140-160, 171-191, 241-261, 273-293, 301-321, 324-344, 366-386, 409-429, 457-477, 482-502, and 584-604; these read TLLSLLILTVPIMASNFYPYT, IYVKTMVSYAFLVSLIPTMIF, MILMPVALSVTWSIMEFSMWY, FFKYLLLFLITMMLLVTANNL, LFIGWEGVGIMSFLLIGWWYG, AILYNRIGDVGFLVAMAWFLF, TPVSALLHSSTMVVAGIFLLI, IQTMMLCLGAITTLFTAICAL, IVAFSTSSQLGLMMVTVGINQ, LAFLHICTHAFFKAMLFLCSG, LPFTTTALITGSLALTGMPFL, LFITLIATSLTAVYSTRIIYF, LLVGSIFAGFFISNNITPTTI, MPTYLKTTAMLVTLLGFIVAL, and IKLYFLSFLITLTLSLIMLNF.

The protein belongs to the complex I subunit 5 family. In terms of assembly, core subunit of respiratory chain NADH dehydrogenase (Complex I) which is composed of 45 different subunits.

It localises to the mitochondrion inner membrane. It carries out the reaction a ubiquinone + NADH + 5 H(+)(in) = a ubiquinol + NAD(+) + 4 H(+)(out). Its function is as follows. Core subunit of the mitochondrial membrane respiratory chain NADH dehydrogenase (Complex I) which catalyzes electron transfer from NADH through the respiratory chain, using ubiquinone as an electron acceptor. Essential for the catalytic activity and assembly of complex I. The polypeptide is NADH-ubiquinone oxidoreductase chain 5 (MT-ND5) (Rousettus amplexicaudatus (Common rousette)).